Consider the following 296-residue polypeptide: Ribosomal protein L11 methyltransferase (296 aa).

S-adenosyl-L-methionine-binding residues include T146, G167, D189, and N231.

It belongs to the methyltransferase superfamily. PrmA family.

Its subcellular location is the cytoplasm. The enzyme catalyses L-lysyl-[protein] + 3 S-adenosyl-L-methionine = N(6),N(6),N(6)-trimethyl-L-lysyl-[protein] + 3 S-adenosyl-L-homocysteine + 3 H(+). Functionally, methylates ribosomal protein L11. This chain is Ribosomal protein L11 methyltransferase, found in Haemophilus influenzae (strain ATCC 51907 / DSM 11121 / KW20 / Rd).